A 341-amino-acid chain; its full sequence is Probable membrane-associated kinase regulator 1 (341 aa).

Disordered regions lie at residues 1-29 (MRRQ…FEFN), 67-122 (TLGS…SSRP), 158-185 (PKTN…KRMS), 206-230 (LSPK…NNIR), and 288-310 (RGGF…SVSS). Low complexity-rich tracts occupy residues 12–29 (PPQS…FEFN), 67–108 (TLGS…SFPL), and 167–180 (SSSS…APSS). The segment covering 208–230 (PKQSSNIKTESSSSLKDSGNNIR) has biased composition (polar residues). The segment covering 297–310 (SCSSSSSNNNSVSS) has biased composition (low complexity).

A C-terminus-derived peptide binds BRI1 in vitro.

It is found in the cell membrane. In terms of biological role, may negatively regulate brassinosteroid signaling. The chain is Probable membrane-associated kinase regulator 1 (MAKR1) from Arabidopsis thaliana (Mouse-ear cress).